Consider the following 1075-residue polypeptide: Disheveled-associated activator of morphogenesis 2 (1075 aa).

Positions 40–416 constitute a GBD/FH3 domain; it reads VPIPPTEELN…QIVLQDERGD (377 aa). Positions 437–517 form a coiled coil; that stretch reads NENEVKQWRD…VAQLNEYSQG (81 aa). Disordered regions lie at residues 517–611, 1006–1025, and 1048–1075; these read GGSI…IPQP, KEQR…SISE, and SKLK…KLNY. The span at 523-532 shows a compositional bias: pro residues; sequence PAPPPPPPGG. Positions 533 to 544 are enriched in low complexity; the sequence is PLALSSALSSAL. Over residues 550 to 581 the composition is skewed to pro residues; it reads PPLPPPLPFSSCPPPPAPPPPPGGPPPPPGAP. The 471-residue stretch at 605-1075 folds into the FH2 domain; sequence KKSIPQPSHP…RERVVTKLNY (471 aa). One can recognise a DAD domain in the interval 1025–1075; that stretch reads EETGEFDDLVSALRSGEVFDKDLSKLKRNRKRSGNQGLETSRERVVTKLNY. Positions 1064-1075 are enriched in basic and acidic residues; it reads TSRERVVTKLNY.

It belongs to the formin homology family. In terms of tissue distribution, expressed in progenitor populations of the embryonic spinal cord (at protein level).

Functionally, key regulator of the Wnt signaling pathway, which is required for various processes during development, such as dorsal patterning, determination of left/right symmetry or myelination in the central nervous system. Acts downstream of Wnt ligands and upstream of beta-catenin (CTNNB1). Required for canonical Wnt signaling pathway during patterning in the dorsal spinal cord by promoting the aggregation of Disheveled (Dvl) complexes, thereby clustering and formation of Wnt receptor signalosomes and potentiating Wnt activity. During dorsal patterning of the spinal cord, inhibits oligodendrocytes differentiation via interaction with PIP5K1A. Also regulates non-canonical Wnt signaling pathway. Acts downstream of PITX2 in the developing gut and is required for left/right asymmetry within dorsal mesentery: affects mesenchymal condensation by lengthening cadherin-based junctions through WNT5A and non-canonical Wnt signaling, inducing polarized condensation in the left dorsal mesentery necessary to initiate gut rotation. Together with DAAM1, required for myocardial maturation and sarcomere assembly. This is Disheveled-associated activator of morphogenesis 2 from Gallus gallus (Chicken).